We begin with the raw amino-acid sequence, 359 residues long: MPLELELCPGRWVGGKHPCFIIAEIGQNHQGDIDVAKRMIRTAKECGADCAKFQKSELEFKFNRKALERPYTSKHSWGKTYGEHKRHLEFSHDQYKELQSYAQEIGIFFTASGMDEMAVEFLHELNVPFFKVGSGDTNNFPYLEKTAKKGRPMVISSGMQSMDTMKQVYQIVKPLNPNFCFLQCTSAYPLQPEDANLRVISEYQKLFPDIPIGYSGHETGIAISVAAVALGAKVLERHITLDKTWKGSDHSASLEPGELAELVRSVRLVERALGSPTKQLLPCEMACNEKLGKSVVAKVKIPAGTTLTLDMLTVKVGEPKGYPPEDIFNLAGKKVLVTIEEDDTVMEESVESHSKKIKA.

3 positions are modified to N6-acetyllysine: lysine 61, lysine 74, and lysine 79. Serine 275 is subject to Phosphoserine. Lysine 290 is modified (N6-acetyllysine). Residues 294 to 353 enclose the AFP-like domain; that stretch reads SVVAKVKIPAGTTLTLDMLTVKVGEPKGYPPEDIFNLAGKKVLVTIEEDDTVMEESVESH.

In terms of tissue distribution, ubiquitous.

It is found in the cytoplasm. It carries out the reaction aldehydo-N-acetyl-D-mannosamine 6-phosphate + phosphoenolpyruvate + H2O = N-acetylneuraminate 9-phosphate + phosphate. Catalyzes condensation of phosphoenolpyruvate (PEP) and N-acetylmannosamine 6-phosphate (ManNAc-6-P) to synthesize N-acetylneuraminate-9-phosphate (Neu5Ac-9-P). Neu5Ac-9-P is the phosphorylated forms of sialic acid N-acetylneuraminic acid (Neu5Ac). In contrast with human ortholog, has no detectable activity towards D-mannose 6-phosphate. In Mus musculus (Mouse), this protein is N-acetylneuraminate-9-phosphate synthase.